A 683-amino-acid polypeptide reads, in one-letter code: Methionine--tRNA ligase (683 aa).

The short motif at 15–25 is the 'HIGH' region element; the sequence is PYANGPIHLGH. The Zn(2+) site is built by Cys146, Cys149, Cys159, and Cys162. Positions 332-336 match the 'KMSKS' region motif; sequence KMSKS. ATP is bound at residue Lys335. The region spanning 581–683 is the tRNA-binding domain; it reads DFFKVDLRVA…AGAKAGQRVK (103 aa).

This sequence belongs to the class-I aminoacyl-tRNA synthetase family. MetG type 1 subfamily. In terms of assembly, homodimer. Zn(2+) is required as a cofactor.

It localises to the cytoplasm. The catalysed reaction is tRNA(Met) + L-methionine + ATP = L-methionyl-tRNA(Met) + AMP + diphosphate. In terms of biological role, is required not only for elongation of protein synthesis but also for the initiation of all mRNA translation through initiator tRNA(fMet) aminoacylation. This chain is Methionine--tRNA ligase, found in Histophilus somni (strain 129Pt) (Haemophilus somnus).